We begin with the raw amino-acid sequence, 154 residues long: Ferredoxin C 1, chloroplastic (154 aa).

The N-terminal 56 residues, 1–56, are a transit peptide targeting the chloroplast; sequence MATLPLPTQTSTISLPKPYLSNSFSFPLRNATLSTTTNRRNFLTTGRIIARAYKVV. The 2Fe-2S ferredoxin-type domain maps to 57–142; it reads VEHDGKTTEL…DCHIKMIPEE (86 aa). 4 residues coordinate [2Fe-2S] cluster: C89, C94, C97, and C126.

This sequence belongs to the 2Fe2S plant-type ferredoxin family. Requires [2Fe-2S] cluster as cofactor.

The protein localises to the plastid. The protein resides in the chloroplast. Ferredoxins are iron-sulfur proteins that transfer electrons in a wide variety of metabolic reactions. Mediates alternative electron partitioning in conditions of acceptor limitation at photosystem I. Accepts electrons from photosystem I (PSI) and is capable of electron transfer with FNR, but cannot support photoreduction of NADP(+). In Arabidopsis thaliana (Mouse-ear cress), this protein is Ferredoxin C 1, chloroplastic.